Consider the following 257-residue polypeptide: Acetyl-coenzyme A carboxylase carboxyl transferase subunit beta (257 aa).

In terms of domain architecture, CoA carboxyltransferase N-terminal spans 5-257 (VFTKCERCKQ…DLERLLGFVG (253 aa)). Positions 9, 12, 28, and 31 each coordinate Zn(2+). The segment at 9-31 (CERCKQPVYEKDLRARFNVCPNC) adopts a C4-type zinc-finger fold.

The protein belongs to the AccD/PCCB family. In terms of assembly, acetyl-CoA carboxylase is a heterohexamer composed of biotin carboxyl carrier protein (AccB), biotin carboxylase (AccC) and two subunits each of ACCase subunit alpha (AccA) and ACCase subunit beta (AccD). It depends on Zn(2+) as a cofactor.

The protein localises to the cytoplasm. The enzyme catalyses N(6)-carboxybiotinyl-L-lysyl-[protein] + acetyl-CoA = N(6)-biotinyl-L-lysyl-[protein] + malonyl-CoA. The protein operates within lipid metabolism; malonyl-CoA biosynthesis; malonyl-CoA from acetyl-CoA: step 1/1. In terms of biological role, component of the acetyl coenzyme A carboxylase (ACC) complex. Biotin carboxylase (BC) catalyzes the carboxylation of biotin on its carrier protein (BCCP) and then the CO(2) group is transferred by the transcarboxylase to acetyl-CoA to form malonyl-CoA. The sequence is that of Acetyl-coenzyme A carboxylase carboxyl transferase subunit beta from Rubrobacter xylanophilus (strain DSM 9941 / JCM 11954 / NBRC 16129 / PRD-1).